We begin with the raw amino-acid sequence, 230 residues long: Small ribosomal subunit protein uS3 (230 aa).

Residues 39 to 107 (VRNYLRQKLA…PIHVNIEEIR (69 aa)) enclose the KH type-2 domain. The segment at 210-230 (SSKPEHESKQRKAGRRNAAAN) is disordered.

Belongs to the universal ribosomal protein uS3 family. In terms of assembly, part of the 30S ribosomal subunit. Forms a tight complex with proteins S10 and S14.

Its function is as follows. Binds the lower part of the 30S subunit head. Binds mRNA in the 70S ribosome, positioning it for translation. This Neisseria gonorrhoeae (strain ATCC 700825 / FA 1090) protein is Small ribosomal subunit protein uS3.